The following is a 379-amino-acid chain: Protein RecA (379 aa).

The segment covering 1–14 (MSNEIKSISSSNSS) has biased composition (low complexity). Residues 1–24 (MSNEIKSISSSNSSCPPNEARSGE) are disordered. 84–91 (GPESSGKT) is a binding site for ATP.

This sequence belongs to the RecA family.

The protein localises to the cytoplasm. Can catalyze the hydrolysis of ATP in the presence of single-stranded DNA, the ATP-dependent uptake of single-stranded DNA by duplex DNA, and the ATP-dependent hybridization of homologous single-stranded DNAs. It interacts with LexA causing its activation and leading to its autocatalytic cleavage. This chain is Protein RecA, found in Prochlorococcus marinus (strain SARG / CCMP1375 / SS120).